The primary structure comprises 187 residues: Small ribosomal subunit protein uS7 (187 aa).

This sequence belongs to the universal ribosomal protein uS7 family. Part of the 30S ribosomal subunit.

One of the primary rRNA binding proteins, it binds directly to 16S rRNA where it nucleates assembly of the head domain of the 30S subunit. Is located at the subunit interface close to the decoding center. The sequence is that of Small ribosomal subunit protein uS7 from Picrophilus torridus (strain ATCC 700027 / DSM 9790 / JCM 10055 / NBRC 100828 / KAW 2/3).